The primary structure comprises 460 residues: MQSIILIGKPNVGKSSLFNRMARQRIAITSDISGTTRDTNKTQIHIHSKKAMLIDSGGLDESDELFKNVKKNTLKVAKESDIILYLVDGKLAPDDEDRQFFYSLKKLGKPIALVINKVDNKKDEERAWEFANFGVKEIFNLSVTHNVGLDELYEWLEKFLHEEFLIPDEEENLEDFLEYYEEGKEFQFKEVDQNHIRVGIVGRVNVGKSSLLNALVKQERSVVSSIAGTTIDPVNESVVHKDKVIEFVDTAGIRKRGKIQGLERFALNRTEKILSHSQIALLVLDAHEGFNELDERIAGLVAKHYLGVIIVLNKWDKSEMDFDKTVKELRLDRFKFLAYAPVISVSALSGKRVHVLLDKILQIFENFTQKIQTSKLNTLIENATRAHPLPHDYGKLVKIYYAVQYDLAPPKIALIMNRPKALHFSYKRYLQNQIRKEFNFEGVPLVIASRKKGSKENDES.

EngA-type G domains are found at residues 2-164 and 196-368; these read QSII…HEEF and IRVG…ENFT. GTP contacts are provided by residues 8 to 15, 55 to 59, 116 to 119, 202 to 209, 249 to 253, and 313 to 316; these read GKPNVGKS, DSGGL, NKVD, GRVNVGKS, DTAGI, and NKWD. A KH-like domain is found at 369-453; the sequence is QKIQTSKLNT…PLVIASRKKG (85 aa).

It belongs to the TRAFAC class TrmE-Era-EngA-EngB-Septin-like GTPase superfamily. EngA (Der) GTPase family. In terms of assembly, associates with the 50S ribosomal subunit.

Functionally, GTPase that plays an essential role in the late steps of ribosome biogenesis. This is GTPase Der from Campylobacter jejuni subsp. jejuni serotype O:2 (strain ATCC 700819 / NCTC 11168).